The chain runs to 258 residues: MSDLKAAALRALKLMDLTTLNDDDTDAKVISLCHDAKSAVGNTAAICIYPRFIPIAKKTLREQGTPEVRIATVTNFPHGNDDIEIAVAETKAAVAYGADEVDVVFPYRALMAGDEKVGFELVKQCKEACGDILLKVIIETGELKEEALIKKASQICIEAGADFIKTSTGKVPVNATPEYARMMLEVIRDMGVAETVGFKPAGGVRTAEDAAAYLAMADEILGDNWVDARHYRFGASSLLTNLLNTLEVSDEVADPAAY.

Asp102 acts as the Proton donor/acceptor in catalysis. The Schiff-base intermediate with acetaldehyde role is filled by Lys165. The active-site Proton donor/acceptor is Lys199.

This sequence belongs to the DeoC/FbaB aldolase family. DeoC type 2 subfamily.

Its subcellular location is the cytoplasm. The enzyme catalyses 2-deoxy-D-ribose 5-phosphate = D-glyceraldehyde 3-phosphate + acetaldehyde. It functions in the pathway carbohydrate degradation; 2-deoxy-D-ribose 1-phosphate degradation; D-glyceraldehyde 3-phosphate and acetaldehyde from 2-deoxy-alpha-D-ribose 1-phosphate: step 2/2. Catalyzes a reversible aldol reaction between acetaldehyde and D-glyceraldehyde 3-phosphate to generate 2-deoxy-D-ribose 5-phosphate. The sequence is that of Deoxyribose-phosphate aldolase from Vibrio campbellii (strain ATCC BAA-1116).